We begin with the raw amino-acid sequence, 126 residues long: Transcription antitermination protein NusB (126 aa).

The protein belongs to the NusB family.

In terms of biological role, involved in transcription antitermination. Required for transcription of ribosomal RNA (rRNA) genes. Binds specifically to the boxA antiterminator sequence of the ribosomal RNA (rrn) operons. The sequence is that of Transcription antitermination protein NusB from Oceanobacillus iheyensis (strain DSM 14371 / CIP 107618 / JCM 11309 / KCTC 3954 / HTE831).